We begin with the raw amino-acid sequence, 67 residues long: V-type proton ATPase subunit e (67 aa).

Topologically, residues M1–G2 are lumenal. Residues G3–V23 traverse the membrane as a helical segment. Over S24–M35 the chain is Cytoplasmic. Residues S36 to L56 traverse the membrane as a helical segment. Over H57–E67 the chain is Lumenal.

It belongs to the V-ATPase e1/e2 subunit family. V-ATPase is a heteromultimeric enzyme composed of a peripheral catalytic V1 complex (components A to H) attached to an integral membrane V0 proton pore complex (components: a, c, c', c'', d, e, f and VOA1).

It localises to the vacuole membrane. Its function is as follows. Subunit of the V0 complex of vacuolar(H+)-ATPase (V-ATPase), a multisubunit enzyme composed of a peripheral complex (V1) that hydrolyzes ATP and a membrane integral complex (V0) that translocates protons. V-ATPase is responsible for acidifying and maintaining the pH of intracellular compartments. This chain is V-type proton ATPase subunit e (vma9), found in Schizosaccharomyces pombe (strain 972 / ATCC 24843) (Fission yeast).